The following is a 554-amino-acid chain: Pigment biosynthesis transcriptional activator pigB (554 aa).

The interval 1–21 (MFTSSSPEQRKPRQSRQLPGA) is disordered. A DNA-binding region (zn(2)-C6 fungal-type) is located at residues 23–40 (CEECRRKKLRCDRQQPQC).

The protein resides in the nucleus. Functionally, transcription factor; part of the gene cluster that mediates the biosynthesis of azaphilone pigments (MonAzPs), a complex mixture of compounds with a common azaphilone skeleton very widely used as food colorants. Positively regulates the expression of the azaphilone pigments (MonAzPs) gene cluster. This chain is Pigment biosynthesis transcriptional activator pigB, found in Monascus ruber (Mold).